The sequence spans 63 residues: Venom peptide U-reduvitoxin-Pp19 (63 aa).

The first 23 residues, 1 to 23 (MSPYSILFVVVIALCLLPESIVG), serve as a signal peptide directing secretion. Intrachain disulfides connect cysteine 15–cysteine 62, cysteine 25–cysteine 53, and cysteine 30–cysteine 61.

In terms of tissue distribution, hemolymph (at protein level). Also weakly expressed by the venom gland (at protein level).

The protein localises to the secreted. Its function is as follows. Toxin with insecticidal activity. High doses of recombinant toxin causes impaired motor behavior of D.melanogaster, which progress slowly to paralysis and death after several hours. This is Venom peptide U-reduvitoxin-Pp19 from Pristhesancus plagipennis (Common assassin bug).